A 353-amino-acid chain; its full sequence is Protein RecA (353 aa).

67 to 74 (GPESSGKT) is an ATP binding site.

The protein belongs to the RecA family.

It is found in the cytoplasm. Its function is as follows. Can catalyze the hydrolysis of ATP in the presence of single-stranded DNA, the ATP-dependent uptake of single-stranded DNA by duplex DNA, and the ATP-dependent hybridization of homologous single-stranded DNAs. It interacts with LexA causing its activation and leading to its autocatalytic cleavage. This is Protein RecA from Shewanella loihica (strain ATCC BAA-1088 / PV-4).